A 263-amino-acid chain; its full sequence is 1-(5-phosphoribosyl)-5-[(5-phosphoribosylamino)methylideneamino] imidazole-4-carboxamide isomerase (263 aa).

It belongs to the HisA/HisF family.

It is found in the cytoplasm. The catalysed reaction is 1-(5-phospho-beta-D-ribosyl)-5-[(5-phospho-beta-D-ribosylamino)methylideneamino]imidazole-4-carboxamide = 5-[(5-phospho-1-deoxy-D-ribulos-1-ylimino)methylamino]-1-(5-phospho-beta-D-ribosyl)imidazole-4-carboxamide. Its pathway is amino-acid biosynthesis; L-histidine biosynthesis; L-histidine from 5-phospho-alpha-D-ribose 1-diphosphate: step 4/9. In Eremothecium gossypii (strain ATCC 10895 / CBS 109.51 / FGSC 9923 / NRRL Y-1056) (Yeast), this protein is 1-(5-phosphoribosyl)-5-[(5-phosphoribosylamino)methylideneamino] imidazole-4-carboxamide isomerase (HIS6).